Here is an 8797-residue protein sequence, read N- to C-terminus: Nesprin-1 (8797 aa).

The interval Met1–Ser289 is actin-binding. The Cytoplasmic segment spans residues Met1–Arg8746. 2 consecutive Calponin-homology (CH) domains span residues Ile27–Gln134 and Gly178–Pro283. Spectrin repeat units follow at residues Arg314–Phe397, Asp398–Lys502, Met503–Glu609, Glu610–Ala703, Asp704–Ile815, Pro816–Glu923, Thr924–Ile1024, Asp1025–Asp1122, Pro1123–Glu1246, Glu1247–Ile1335, Gln1336–Val1444, Lys1445–His1550, Leu1551–Leu1653, Leu1654–Val1763, Val1764–Ser1879, Leu1880–Leu1976, Ala1977–Cys2081, Cys2082–Ser2195, Leu2196–Thr2303, Ala2304–Ala2401, Ser2402–Cys2513, Ala2514–Cys2619, Gln2620–Val2731, Ile2732–Ile2838, Val2839–Val2962, Ala2963–Glu3062, Gln3063–Leu3171, Lys3172–Leu3275, Asp3276–Ala3387, Leu3388–Leu3490, Val3491–Phe3593, Asn3594–Trp3720, Tyr3721–Gly3814, Leu3815–Lys3920, Val3921–Tyr4028, Gln4029–Lys4139, Ser4140–Asp4235, Leu4236–Ser4339, Val4340–Ala4451, Leu4452–Asn4560, Leu4561–Ala4669, Ile4670–Thr4776, Thr4777–Arg4882, Met4883–Ile4991, Tyr4992–Cys5099, Thr5100–Ala5209, Val5210–Val5318, Lys5319–Lys5424, Ala5425–Leu5522, Asn5523–Ala5630, Ala5631–Ala5736, and Val5737–His5842. Residues Arg314 to Gln8666 are a coiled coil. Position 732 is a phosphoserine (Ser732). Thr2270 carries the post-translational modification Phosphothreonine. Phosphoserine is present on Ser5657. The segment at Pro5859 to Ala5886 is disordered. 19 Spectrin repeats span residues Leu5962 to Lys6071, Leu6072 to Glu6178, Arg6374 to Gln6485, Ile6486 to Leu6581, Asn6582 to Trp6691, Ser6692 to Lys6795, His6796 to Leu6902, His6903 to Leu7020, Leu7021 to Val7128, Leu7129 to Leu7237, Leu7238 to Gly7350, Val7351 to Phe7454, Leu7455 to Ile7558, Asp7559 to Leu7671, Leu7672 to Ala7783, Val7784 to Thr7883, Leu7884 to Thr7997, Trp7998 to Phe8106, and Ile8107 to Pro8216. The residue at position 8223 (Ser8223) is a Phosphoserine. The disordered stretch occupies residues Asp8246–Asp8279. Over residues Ser8247–Leu8265 the composition is skewed to low complexity. Thr8274 is modified (phosphothreonine). Residues Ser8277, Ser8280, and Ser8305 each carry the phosphoserine modification. 3 Spectrin repeats span residues Ser8329 to Asn8438, Leu8439 to Ala8548, and Leu8549 to Gln8666. The residue at position 8360 (Thr8360) is a Phosphothreonine. The segment at Ser8671–Gly8734 is disordered. Composition is skewed to polar residues over residues Thr8680–Gln8696 and Ser8704–Ser8729. The region spanning Arg8738 to Leu8797 is the KASH domain. A helical; Anchor for type IV membrane protein membrane pass occupies residues Ala8747–Met8767. At Ser8768–Leu8797 the chain is on the perinuclear space side.

It belongs to the nesprin family. In terms of assembly, core component of LINC complexes which are composed of inner nuclear membrane SUN domain-containing proteins coupled to outer nuclear membrane KASH domain-containing nesprins. SUN and KASH domain-containing proteins seem to bind each other promiscuously; however, differentially expression of LINC complex constituents can give rise to specific assemblies. At least SUN1/2-containing core LINC complexes are proposed to be hexameric composed of three protomers of each KASH and SUN domain-containing protein. The SUN2:SYNE1/KASH1 LINC complex is a heterohexamer; the homotrimeric cloverleave-like conformation of the SUN domain is a prerequisite for LINC complex formation in which three separate SYNE1/KASH1 peptides bind at the interface of adjacent SUN domains. Self-associates. Interacts with SYNE3. Interacts with SPAG4/SUN4. May interact with MUSK. Interacts with F-actin via its N-terminal domain. Interacts with EMD and LMNA in vitro. Interacts (via KASH domain) with TMEM258. Post-translationally, the disulfid bond with SUN1 or SUN2 is required for stability of the respective LINC complex under tensile forces. As to expression, expressed in HeLa, A431, A172 and HaCaT cells (at protein level). Widely expressed. Highly expressed in skeletal and smooth muscles, heart, spleen, peripheral blood leukocytes, pancreas, cerebellum, stomach, kidney and placenta. Isoform GSRP-56 is predominantly expressed in heart and skeletal muscle (at protein level).

It is found in the nucleus outer membrane. The protein localises to the nucleus. Its subcellular location is the nucleus envelope. It localises to the cytoplasm. The protein resides in the cytoskeleton. It is found in the myofibril. The protein localises to the sarcomere. Its subcellular location is the golgi apparatus. Functionally, multi-isomeric modular protein which forms a linking network between organelles and the actin cytoskeleton to maintain the subcellular spatial organization. As a component of the LINC (LInker of Nucleoskeleton and Cytoskeleton) complex involved in the connection between the nuclear lamina and the cytoskeleton. The nucleocytoplasmic interactions established by the LINC complex play an important role in the transmission of mechanical forces across the nuclear envelope and in nuclear movement and positioning. May be involved in nucleus-centrosome attachment and nuclear migration in neural progenitors implicating LINC complex association with SUN1/2 and probably association with cytoplasmic dynein-dynactin motor complexes; SYNE1 and SYNE2 may act redundantly. Required for centrosome migration to the apical cell surface during early ciliogenesis. May be involved in nuclear remodeling during sperm head formation in spermatogenesis; a probable SUN3:SYNE1/KASH1 LINC complex may tether spermatid nuclei to posterior cytoskeletal structures such as the manchette. The sequence is that of Nesprin-1 from Homo sapiens (Human).